The primary structure comprises 198 residues: Recombination protein RecR (198 aa).

The C4-type zinc-finger motif lies at 57–72 (CSVCGNITDEDPCEIC). The Toprim domain occupies 80 to 175 (EMILVVEQPK…KVTRLAHGLA (96 aa)).

Belongs to the RecR family.

May play a role in DNA repair. It seems to be involved in an RecBC-independent recombinational process of DNA repair. It may act with RecF and RecO. The polypeptide is Recombination protein RecR (Latilactobacillus sakei subsp. sakei (strain 23K) (Lactobacillus sakei subsp. sakei)).